The sequence spans 458 residues: tRNA-2-methylthio-N(6)-dimethylallyladenosine synthase (458 aa).

Residues 3–120 enclose the MTTase N-terminal domain; the sequence is QKLYIETFGC…LPSMLEQVRC (118 aa). Cys12, Cys49, Cys83, Cys157, Cys161, and Cys164 together coordinate [4Fe-4S] cluster. Positions 143–375 constitute a Radical SAM core domain; sequence RADGPKAFVS…QAKIADNAAK (233 aa). The TRAM domain occupies 378-441; sequence ASMVGSIQSV…PNSLRGRLIG (64 aa).

Belongs to the methylthiotransferase family. MiaB subfamily. Monomer. It depends on [4Fe-4S] cluster as a cofactor.

The protein localises to the cytoplasm. It carries out the reaction N(6)-dimethylallyladenosine(37) in tRNA + (sulfur carrier)-SH + AH2 + 2 S-adenosyl-L-methionine = 2-methylsulfanyl-N(6)-dimethylallyladenosine(37) in tRNA + (sulfur carrier)-H + 5'-deoxyadenosine + L-methionine + A + S-adenosyl-L-homocysteine + 2 H(+). Catalyzes the methylthiolation of N6-(dimethylallyl)adenosine (i(6)A), leading to the formation of 2-methylthio-N6-(dimethylallyl)adenosine (ms(2)i(6)A) at position 37 in tRNAs that read codons beginning with uridine. The protein is tRNA-2-methylthio-N(6)-dimethylallyladenosine synthase of Methylococcus capsulatus (strain ATCC 33009 / NCIMB 11132 / Bath).